A 490-amino-acid polypeptide reads, in one-letter code: MGSLPSPNDPSNTFNPMDLTELSTESKLVVDFITQYYQTLETRPVQPRVKPGFLTGQLPDKAPFHGESMEVILSDVNEKIVPGLTHWQSPNFHAYFPASSSNAGLLGELLCSGLSVIGFTWSSSPAATELENVVVDWMAKMLNLPSSFCFSGGGGGVLQANTCEAVLCTLAAARDKALNRVGDDQINKLVLYCSDQTHFTIHKGAKLIGIRSKNIKSITTKKENEFKLCPNDLRDAIRSDLEAGLVPFYVCGTIGTTALGVVDPIKELGKVAREFDLWLHVDGAYGGSACICPEFQHYLDGVDLVDSISMNAHKWLLSNLDCCFLWLQSPNALIESLAAEANFLKGGSEMVDYKDWQISLSRRFRAIKMWMVIRRYGVSNLIEHIRSDVSMAVRFEEMVAADDRFEIVFPRKFALVCFKLSSEKTPPGRDSELTRELMERVNSSGKAYLSGVQMGRIFFIRCVIGSSLTEERHVDNLWRLIQETAQSIVS.

L-phenylalanine is bound by residues proline 97, histidine 198, and histidine 313. Lysine 314 bears the N6-(pyridoxal phosphate)lysine mark. Residue phenylalanine 343 coordinates L-phenylalanine.

The protein belongs to the group II decarboxylase family. As to quaternary structure, homodimer. It depends on pyridoxal 5'-phosphate as a cofactor.

It carries out the reaction L-tyrosine + O2 + H2O + H(+) = (4-hydroxyphenyl)acetaldehyde + H2O2 + NH4(+) + CO2. Its function is as follows. Catalyzes the production of 4-hydroxyphenylacetaldehyde (HPAA) directly from L-tyrosine, tyramine not being formed as an intermediate. The sequence is that of 4-hydroxyphenylacetaldehyde synthase from Rhodiola rosea (Roseroot).